Here is a 126-residue protein sequence, read N- to C-terminus: UPF0212 protein TON_0350 (126 aa).

The protein belongs to the UPF0212 family.

This is UPF0212 protein TON_0350 from Thermococcus onnurineus (strain NA1).